Consider the following 104-residue polypeptide: Large ribosomal subunit protein uL24 (104 aa).

Belongs to the universal ribosomal protein uL24 family. In terms of assembly, part of the 50S ribosomal subunit.

In terms of biological role, one of two assembly initiator proteins, it binds directly to the 5'-end of the 23S rRNA, where it nucleates assembly of the 50S subunit. Its function is as follows. One of the proteins that surrounds the polypeptide exit tunnel on the outside of the subunit. This Bartonella quintana (strain Toulouse) (Rochalimaea quintana) protein is Large ribosomal subunit protein uL24.